The following is a 195-amino-acid chain: Probable chorismate pyruvate-lyase (195 aa).

Residues arginine 79, leucine 117, and glutamate 180 each coordinate substrate.

This sequence belongs to the UbiC family.

The protein resides in the cytoplasm. The catalysed reaction is chorismate = 4-hydroxybenzoate + pyruvate. The protein operates within cofactor biosynthesis; ubiquinone biosynthesis. Functionally, removes the pyruvyl group from chorismate, with concomitant aromatization of the ring, to provide 4-hydroxybenzoate (4HB) for the ubiquinone pathway. This is Probable chorismate pyruvate-lyase from Ralstonia nicotianae (strain ATCC BAA-1114 / GMI1000) (Ralstonia solanacearum).